Reading from the N-terminus, the 294-residue chain is 4-hydroxy-tetrahydrodipicolinate synthase (294 aa).

Thr-44 lines the pyruvate pocket. Tyr-132 functions as the Proton donor/acceptor in the catalytic mechanism. Catalysis depends on Lys-160, which acts as the Schiff-base intermediate with substrate. Residue Val-202 participates in pyruvate binding.

It belongs to the DapA family. As to quaternary structure, homotetramer; dimer of dimers.

Its subcellular location is the cytoplasm. The catalysed reaction is L-aspartate 4-semialdehyde + pyruvate = (2S,4S)-4-hydroxy-2,3,4,5-tetrahydrodipicolinate + H2O + H(+). It participates in amino-acid biosynthesis; L-lysine biosynthesis via DAP pathway; (S)-tetrahydrodipicolinate from L-aspartate: step 3/4. Its function is as follows. Catalyzes the condensation of (S)-aspartate-beta-semialdehyde [(S)-ASA] and pyruvate to 4-hydroxy-tetrahydrodipicolinate (HTPA). The polypeptide is 4-hydroxy-tetrahydrodipicolinate synthase (Leptospira borgpetersenii serovar Hardjo-bovis (strain L550)).